Reading from the N-terminus, the 168-residue chain is Gremlin-2 (168 aa).

A signal peptide spans methionine 1 to threonine 21. N-linked (GlcNAc...) asparagine glycosylation is present at asparagine 40. 4 cysteine pairs are disulfide-bonded: cysteine 73–cysteine 123, cysteine 87–cysteine 137, cysteine 97–cysteine 155, and cysteine 101–cysteine 157. The region spanning cysteine 73–serine 163 is the CTCK domain. Asparagine 161 carries N-linked (GlcNAc...) asparagine glycosylation.

This sequence belongs to the DAN family. As to quaternary structure, homodimer. Interacts with BMP2, BMP4 and BMP7, but has lower affinity for BMP7 than for BMP2 and BMP4. Binds heparin; this impairs the interaction with BMP2. Post-translationally, N-glycosylated. In terms of tissue distribution, highly expressed in the ovary, followed by brain, spleen, colon, kidney and uterus. In ovary expressed in granulosa cells of selective early antral follicles.

It localises to the secreted. Functionally, cytokine that inhibits the activity of BMP2 and BMP4 in a dose-dependent manner, and thereby modulates signaling by BMP family members. Contributes to the regulation of embryonic morphogenesis via BMP family members. Antagonizes BMP4-induced suppression of progesterone production in granulosa cells. This Mus musculus (Mouse) protein is Gremlin-2 (Grem2).